We begin with the raw amino-acid sequence, 216 residues long: Nucleoside triphosphate pyrophosphatase (216 aa).

The Proton acceptor role is filled by Asp82.

It belongs to the Maf family. A divalent metal cation is required as a cofactor.

The protein localises to the cytoplasm. The enzyme catalyses a ribonucleoside 5'-triphosphate + H2O = a ribonucleoside 5'-phosphate + diphosphate + H(+). It carries out the reaction a 2'-deoxyribonucleoside 5'-triphosphate + H2O = a 2'-deoxyribonucleoside 5'-phosphate + diphosphate + H(+). Its function is as follows. Nucleoside triphosphate pyrophosphatase. May have a dual role in cell division arrest and in preventing the incorporation of modified nucleotides into cellular nucleic acids. The protein is Nucleoside triphosphate pyrophosphatase of Mycobacterium marinum (strain ATCC BAA-535 / M).